Reading from the N-terminus, the 887-residue chain is 3-hydroxy-3-methylglutaryl-coenzyme A reductase (887 aa).

Residues 1-9 (MLSRLFRMH) lie on the Cytoplasmic side of the membrane. A helical transmembrane segment spans residues 10-39 (GLFVASHPWEVIVGTVTLTICMMSMNMFTG). The Lumenal segment spans residues 40–56 (NNKICGWNYECPKFEED). Residues 57 to 78 (VLSSDIIILTITRCIAILYIYF) form a helical membrane-spanning segment. Residues 61-218 (DIIILTITRC…MTFFPACVSL (158 aa)) form the SSD domain. Residues 75-78 (YIYF) carry the INSIG-binding motif motif. Residues 79–89 (QFQNLRQLGSK) lie on the Cytoplasmic side of the membrane. K89 is covalently cross-linked (Glycyl lysine isopeptide (Lys-Gly) (interchain with G-Cter in ubiquitin)). The chain crosses the membrane as a helical span at residues 90-114 (YILGIAGLFTIFSSFVFSTVVIHFL). The Lumenal portion of the chain corresponds to 115–123 (DKELTGLNE). Residues 124–149 (ALPFFLLLIDLSRASALAKFALSSNS) traverse the membrane as a helical segment. Over 150-159 (QDEVRENIAR) the chain is Cytoplasmic. The helical transmembrane segment at 160 to 187 (GMAILGPTFTLDALVECLVIGVGTMSGV) threads the bilayer. Over 188–191 (RQLE) the chain is Lumenal. Residues 192–220 (IMCCFGCMSVLANYFVFMTFFPACVSLVL) form a helical membrane-spanning segment. At 221 to 248 (ELSRESREGRPIWQLSHFARVLEEEENK) the chain is on the cytoplasmic side. Residue K248 forms a Glycyl lysine isopeptide (Lys-Gly) (interchain with G-Cter in ubiquitin) linkage. Residues 249–275 (PNPVTQRVKMIMSLGLVLVHAHSRWIA) form a helical membrane-spanning segment. Over 276–314 (DPSPQNSTTEHSKVSLGLDEDVSKRIEPSVSLWQFYLSK) the chain is Lumenal. N-linked (GlcNAc...) asparagine glycosylation is present at N281. The chain crosses the membrane as a helical span at residues 315–339 (MISMDIEQVVTLSLAFLLAVKYIFF). The Cytoplasmic portion of the chain corresponds to 340 to 887 (EQAETESTLS…LQGTCTKKSA (548 aa)). Active-site charge relay system residues include E558, K690, and D766. The Proton donor role is filled by H865. Position 871 is a phosphoserine; by AMPK (S871).

Belongs to the HMG-CoA reductase family. As to quaternary structure, homotetramer. Homodimer. Interacts (via its SSD) with INSIG1; the interaction, accelerated by sterols, leads to the recruitment of HMGCR to AMFR/gp78 for its ubiquitination by the sterol-mediated ERAD pathway. Interacts with UBIAD1. In terms of processing, N-glycosylated. Glycosylated with high mannose chains including Man(6)(GlcNAc)(2), Man(7)(GlcNAc)(2) and Man(8)(GlcNAc)(2). Deglycosylated by NGLY1 on release from the endoplasmic reticulum (ER) in a sterol-mediated manner. Undergoes sterol-mediated ubiquitination and ER-associated degradation (ERAD). Accumulation of sterols in the endoplasmic reticulum (ER) membrane, triggers binding of the reductase to the ER membrane protein INSIG1 or INSIG2. The INSIG1 binding leads to the recruitment of the ubiquitin ligase, AMFR/gp78, RNF139 or RNF145, initiating ubiquitination of the reductase. The ubiquitinated reductase is then extracted from the ER membrane and delivered to cytosolic 26S proteosomes by a mechanism probably mediated by the ATPase Valosin-containing protein VCP/p97. The INSIG2-binding leads to the recruitment of the ubiquitin ligase RNF139, initiating ubiquitination of the reductase. Lys-248 is the main site of ubiquitination. Ubiquitination is enhanced by the presence of a geranylgeranylated protein. Post-translationally, phosphorylated. Phosphorylation at Ser-871 reduces the catalytic activity.

The protein resides in the endoplasmic reticulum membrane. It localises to the peroxisome membrane. It catalyses the reaction (R)-mevalonate + 2 NADP(+) + CoA = (3S)-3-hydroxy-3-methylglutaryl-CoA + 2 NADPH + 2 H(+). It functions in the pathway metabolic intermediate biosynthesis; (R)-mevalonate biosynthesis; (R)-mevalonate from acetyl-CoA: step 3/3. Regulated by a negative feedback mechanism through sterols and non-sterol metabolites derived from mevalonate. Phosphorylation at Ser-871 down-regulates the catalytic activity. Its function is as follows. Catalyzes the conversion of (3S)-hydroxy-3-methylglutaryl-CoA (HMG-CoA) to mevalonic acid, the rate-limiting step in the synthesis of cholesterol and other isoprenoids, thus plays a critical role in cellular cholesterol homeostasis. This Cricetulus griseus (Chinese hamster) protein is 3-hydroxy-3-methylglutaryl-coenzyme A reductase (HMGCR).